The following is a 131-amino-acid chain: Fumarate reductase subunit C (131 aa).

The next 3 membrane-spanning stretches (helical) occupy residues 30-50, 58-78, and 109-129; these read EGTCLPQLWFSLVVLFGVFAL, AGFVGFLSNPIVMLINIVTLI, and IVRGLWGLTIVVTVVILAVAL.

Belongs to the FrdC family. As to quaternary structure, part of an enzyme complex containing four subunits: a flavoprotein (FrdA), an iron-sulfur protein (FrdB), and two hydrophobic anchor proteins (FrdC and FrdD).

Its subcellular location is the cell inner membrane. In terms of biological role, two distinct, membrane-bound, FAD-containing enzymes are responsible for the catalysis of fumarate and succinate interconversion; fumarate reductase is used in anaerobic growth, and succinate dehydrogenase is used in aerobic growth. Anchors the catalytic components of the fumarate reductase complex to the cell inner membrane, binds quinones. The polypeptide is Fumarate reductase subunit C (Proteus mirabilis (strain HI4320)).